The sequence spans 298 residues: Cyclin-dependent kinase 2 (298 aa).

Met-1 is modified (N-acetylmethionine). The region spanning 4-286 is the Protein kinase domain; sequence FQKVEKIGEG…AKAALAHPFF (283 aa). Lys-6 is subject to N6-acetyllysine. 10-18 is a binding site for ATP; sequence IGEGTYGVV. Thr-14 carries the post-translational modification Phosphothreonine. At Tyr-15 the chain carries Phosphotyrosine; by WEE1. Tyr-19 is subject to Phosphotyrosine. ATP-binding positions include Lys-33, 81-83, and Asp-86; that span reads EFL. Asp-127 (proton acceptor) is an active-site residue. ATP contacts are provided by residues 129–132 and Asp-145; that span reads KPQN. Mg(2+)-binding residues include Asn-132 and Asp-145. Thr-160 carries the phosphothreonine; by CAK and CCRK modification.

It belongs to the protein kinase superfamily. CMGC Ser/Thr protein kinase family. CDC2/CDKX subfamily. Found in a complex with CABLES1, CCNA1 and CCNE1. Interacts with CABLES1. Interacts with UHRF2. Part of a complex consisting of UHRF2, CDK2 and CCNE1. Interacts with the Speedy/Ringo proteins SPDYA and SPDYC. Interaction with SPDYA promotes kinase activation via a conformation change that alleviates obstruction of the substrate-binding cleft by the T-loop. Found in a complex with both SPDYA and CDKN1B/KIP1. Binds to RB1 and CDK7. Binding to CDKN1A (p21) leads to CDK2/cyclin E inactivation at the G1-S phase DNA damage checkpoint, thereby arresting cells at the G1-S transition during DNA repair. Associated with PTPN6 and beta-catenin/CTNNB1. Interacts with CACUL1. May interact with CEP63. Interacts with ANKRD17. Interacts with CEBPA (when phosphorylated). Forms a ternary complex with CCNA2 and CDKN1B; CDKN1B inhibits the kinase activity of CDK2 through conformational rearrangements. Interacts with cyclins A, B1, B3, D, or E. Interacts with CDK2AP2. The cofactor is Mg(2+). Post-translationally, phosphorylated at Thr-160 by CDK7 in a CAK complex. Phosphorylation at Thr-160 promotes kinase activity, whereas phosphorylation at Tyr-15 by WEE1 reduces slightly kinase activity. Phosphorylated on Thr-14 and Tyr-15 during S and G2 phases before being dephosphorylated by CDC25A. Nitrosylated after treatment with nitric oxide (DETA-NO).

The protein resides in the cytoplasm. The protein localises to the cytoskeleton. It is found in the microtubule organizing center. Its subcellular location is the centrosome. It localises to the nucleus. The protein resides in the cajal body. The protein localises to the endosome. The enzyme catalyses L-seryl-[protein] + ATP = O-phospho-L-seryl-[protein] + ADP + H(+). The catalysed reaction is L-threonyl-[protein] + ATP = O-phospho-L-threonyl-[protein] + ADP + H(+). Its activity is regulated as follows. Phosphorylation at Thr-14 or Tyr-15 inactivates the enzyme, while phosphorylation at Thr-160 activates it. Stimulated by MYC. Inactivated by CDKN1A (p21). In terms of biological role, serine/threonine-protein kinase involved in the control of the cell cycle; essential for meiosis, but dispensable for mitosis. Phosphorylates CABLES1, CTNNB1, CDK2AP2, ERCC6, NBN, USP37, p53/TP53, NPM1, CDK7, RB1, BRCA2, MYC, NPAT, EZH2. Triggers duplication of centrosomes and DNA. Acts at the G1-S transition to promote the E2F transcriptional program and the initiation of DNA synthesis, and modulates G2 progression; controls the timing of entry into mitosis/meiosis by controlling the subsequent activation of cyclin B/CDK1 by phosphorylation, and coordinates the activation of cyclin B/CDK1 at the centrosome and in the nucleus. Crucial role in orchestrating a fine balance between cellular proliferation, cell death, and DNA repair in embryonic stem cells (ESCs). Activity of CDK2 is maximal during S phase and G2; activated by interaction with cyclin E during the early stages of DNA synthesis to permit G1-S transition, and subsequently activated by cyclin A2 (cyclin A1 in germ cells) during the late stages of DNA replication to drive the transition from S phase to mitosis, the G2 phase. EZH2 phosphorylation promotes H3K27me3 maintenance and epigenetic gene silencing. Cyclin E/CDK2 prevents oxidative stress-mediated Ras-induced senescence by phosphorylating MYC. Involved in G1-S phase DNA damage checkpoint that prevents cells with damaged DNA from initiating mitosis; regulates homologous recombination-dependent repair by phosphorylating BRCA2, this phosphorylation is low in S phase when recombination is active, but increases as cells progress towards mitosis. In response to DNA damage, double-strand break repair by homologous recombination a reduction of CDK2-mediated BRCA2 phosphorylation. Involved in regulation of telomere repair by mediating phosphorylation of NBN. Phosphorylation of RB1 disturbs its interaction with E2F1. NPM1 phosphorylation by cyclin E/CDK2 promotes its dissociation from unduplicated centrosomes, thus initiating centrosome duplication. Cyclin E/CDK2-mediated phosphorylation of NPAT at G1-S transition and until prophase stimulates the NPAT-mediated activation of histone gene transcription during S phase. Required for vitamin D-mediated growth inhibition by being itself inactivated. Involved in the nitric oxide- (NO) mediated signaling in a nitrosylation/activation-dependent manner. USP37 is activated by phosphorylation and thus triggers G1-S transition. CTNNB1 phosphorylation regulates insulin internalization. Phosphorylates FOXP3 and negatively regulates its transcriptional activity and protein stability. Phosphorylates ERCC6 which is essential for its chromatin remodeling activity at DNA double-strand breaks. Acts as a regulator of the phosphatidylinositol 3-kinase/protein kinase B signal transduction by mediating phosphorylation of the C-terminus of protein kinase B (PKB/AKT1 and PKB/AKT2), promoting its activation. This Bos taurus (Bovine) protein is Cyclin-dependent kinase 2 (CDK2).